The sequence spans 693 residues: Guanyl-specific ribonuclease pgl-3 (693 aa).

Residues 205-447 (KKLMIEGPKI…VNRIIESLEK (243 aa)) are involved in dimerization. Histidine 437 functions as the Proton acceptor in the catalytic mechanism. 3 disordered regions span residues 445 to 468 (LEKS…GPTT), 523 to 591 (AEKN…DATP), and 620 to 693 (SSNG…RGGS). Positions 447–468 (KSSSSEPSATAKQTTTSNGPTT) are enriched in low complexity. 2 stretches are compositionally biased toward polar residues: residues 528–548 (NTPS…SPTK) and 569–580 (ITKVSPQPQERT). The segment at 581 to 614 (GTAWGSGDATPVPLATPVNEYKVSGFGAAPVASG) is required for interaction with sepa-1. Gly residues-rich tracts occupy residues 625 to 634 (SGRGSYGGGR), 641 to 660 (RGAY…SRGY), and 668 to 693 (RGSY…RGGS). The RNA-binding RGG-box stretch occupies residues 633–693 (GRGGDRGGRG…GFFGGSRGGS (61 aa)).

As to quaternary structure, may form a homodimer. Interacts with pgl-1 and pgl-2; this association is not required for P-granule localization of either pgl-1 or pgl-2. Interacts with sepa-1; the interaction is enhanced in the presence of RNA. Interacts with prmt-1; the interaction is direct. Post-translationally, methylated at arginine residues in the RNA-binding RGG-box by prmt-1. Methylation promotes P-granule degradation by autophagy. In terms of tissue distribution, highly expressed in the germline. Expressed in most somatic cells.

It is found in the cytoplasmic granule. The enzyme catalyses [RNA] containing guanosine + H2O = an [RNA fragment]-3'-guanosine-3'-phosphate + a 5'-hydroxy-ribonucleotide-3'-[RNA fragment].. Its function is as follows. Guanyl-specific endoribonuclease which cleaves the phosphodiester bond in single-stranded RNA between the 3'-guanylic residue and the 5'-OH residue of adjacent nucleotide, resulting in the formation of a corresponding 2',3'-cyclic phosphate intermediate. P-granule component involved in germline development. Together with the P-granule component pgl-1, is involved in the formation of P-granules. Together with pgl-1, probably recruits other granule components such as pos-1, mex-3 and glh-1, and RNA to P-granules. In vitro, binds mRNA; this interaction is required for the formation of liquid-like droplets that resemble P-granules. Most likely recruits pgl-1 into P-granules during autophagy. Associates with adapters such as sepa-1 and is required for the accumulation and degradation of P-granules by autophagy in somatic cells. This ensures exclusive localization of the P-granules in germ cells. In addition, may act redundantly with pgl-1 to protect germ cells from excessive germline apoptosis during normal oogenesis and development of the two gonadal arms. This may in part be through regulating the localization of sir-2.1 which is involved in germ cell apoptosis. May protect somatic cells from excessive apoptosis during normal development. The sequence is that of Guanyl-specific ribonuclease pgl-3 from Caenorhabditis elegans.